The sequence spans 121 residues: Small ribosomal subunit protein uS13 (121 aa).

The segment at 93–121 is disordered; sequence RGLPVRGQNTKNNARTRKGPRRTVANKKK. Residues 106–121 are compositionally biased toward basic residues; the sequence is ARTRKGPRRTVANKKK.

This sequence belongs to the universal ribosomal protein uS13 family. As to quaternary structure, part of the 30S ribosomal subunit. Forms a loose heterodimer with protein S19. Forms two bridges to the 50S subunit in the 70S ribosome.

Functionally, located at the top of the head of the 30S subunit, it contacts several helices of the 16S rRNA. In the 70S ribosome it contacts the 23S rRNA (bridge B1a) and protein L5 of the 50S subunit (bridge B1b), connecting the 2 subunits; these bridges are implicated in subunit movement. Contacts the tRNAs in the A and P-sites. The sequence is that of Small ribosomal subunit protein uS13 from Bacillus licheniformis (strain ATCC 14580 / DSM 13 / JCM 2505 / CCUG 7422 / NBRC 12200 / NCIMB 9375 / NCTC 10341 / NRRL NRS-1264 / Gibson 46).